A 397-amino-acid chain; its full sequence is Protein WRKY1 (397 aa).

Residues 326-392 (KVADIPADEF…YEGDHNHNRV (67 aa)) constitute a DNA-binding region (WRKY).

The protein belongs to the WRKY group II-d family. In terms of assembly, interacts with RS2. In terms of tissue distribution, more abundant in apices and young leaf primordia than in fully expanded leaf tissues.

It localises to the nucleus. Its function is as follows. Transcription factor. Interacts specifically with the W box (5'-(T)TGAC[CT]-3'), a frequently occurring elicitor-responsive cis-acting element. The sequence is that of Protein WRKY1 from Zea mays (Maize).